An 820-amino-acid polypeptide reads, in one-letter code: G-type lectin S-receptor-like serine/threonine-protein kinase At1g11280 (820 aa).

The signal sequence occupies residues Met1–Ala28. A Bulb-type lectin domain is found at Ala29–Phe148. At Ala29–Lys434 the chain is on the extracellular side. N-linked (GlcNAc...) asparagine glycans are attached at residues Asn57, Asn92, Asn98, Asn241, and Asn272. In terms of domain architecture, EGF-like spans Pro283–Glu319. 2 disulfide bridges follow: Cys287–Cys299 and Cys293–Cys307. Residues Asn325, Asn341, and Asn384 are each glycosylated (N-linked (GlcNAc...) asparagine). In terms of domain architecture, PAN spans Cys338–Leu422. Cystine bridges form between Cys377–Cys398 and Cys381–Cys387. The chain crosses the membrane as a helical span at residues Ile435–Tyr455. Residues Trp456–Arg820 lie on the Cytoplasmic side of the membrane. Residues Phe505–Phe792 enclose the Protein kinase domain. ATP-binding positions include Leu511–Val519 and Lys533. Ser539 and Ser554 each carry phosphoserine. A caM-binding region spans residues Thr594–Val611. Catalysis depends on Asp630, which acts as the Proton acceptor. Phosphoserine occurs at positions 634 and 647. The residue at position 664 (Thr664) is a Phosphothreonine. Residues Ser707, Ser708, and Ser808 each carry the phosphoserine modification. Residue Thr815 is modified to Phosphothreonine.

Belongs to the protein kinase superfamily. Ser/Thr protein kinase family.

Its subcellular location is the cell membrane. The enzyme catalyses L-seryl-[protein] + ATP = O-phospho-L-seryl-[protein] + ADP + H(+). The catalysed reaction is L-threonyl-[protein] + ATP = O-phospho-L-threonyl-[protein] + ADP + H(+). The sequence is that of G-type lectin S-receptor-like serine/threonine-protein kinase At1g11280 from Arabidopsis thaliana (Mouse-ear cress).